The chain runs to 159 residues: Transcription elongation factor GreA (159 aa).

The stretch at 44-75 forms a coiled coil; sequence SENAEYDAAREQQSQTEARIADLENKLSTATI.

The protein belongs to the GreA/GreB family.

In terms of biological role, necessary for efficient RNA polymerase transcription elongation past template-encoded arresting sites. The arresting sites in DNA have the property of trapping a certain fraction of elongating RNA polymerases that pass through, resulting in locked ternary complexes. Cleavage of the nascent transcript by cleavage factors such as GreA or GreB allows the resumption of elongation from the new 3'terminus. GreA releases sequences of 2 to 3 nucleotides. This chain is Transcription elongation factor GreA, found in Chlorobium limicola (strain DSM 245 / NBRC 103803 / 6330).